Here is a 122-residue protein sequence, read N- to C-terminus: UPF0102 protein CPR_1677 (122 aa).

The protein belongs to the UPF0102 family.

The polypeptide is UPF0102 protein CPR_1677 (Clostridium perfringens (strain SM101 / Type A)).